The sequence spans 333 residues: HTH-type transcriptional regulator pepR1 (333 aa).

The region spanning 6–60 is the HTH lacI-type domain; it reads VTIYDVAREAKVSMATVSRVVNGNNNVRKETRDRVMEVIKRLHYQPNAVAQGLAS. A DNA-binding region (H-T-H motif) is located at residues 8-27; it reads IYDVAREAKVSMATVSRVVN.

In terms of biological role, transcriptional regulator of the pepQ gene for prolidase. This is HTH-type transcriptional regulator pepR1 (pepR1) from Lactobacillus delbrueckii subsp. lactis.